The following is a 101-amino-acid chain: Small ribosomal subunit protein bS18c (101 aa).

Residues 1–19 are compositionally biased toward basic residues; it reads MDKSKQPFRKSKRSFRRRL. The tract at residues 1–24 is disordered; that stretch reads MDKSKQPFRKSKRSFRRRLPPIGS.

Belongs to the bacterial ribosomal protein bS18 family. In terms of assembly, part of the 30S ribosomal subunit.

It is found in the plastid. It localises to the chloroplast. The protein is Small ribosomal subunit protein bS18c of Amborella trichopoda.